Here is a 202-residue protein sequence, read N- to C-terminus: Glycerol-3-phosphate acyltransferase (202 aa).

4 consecutive transmembrane segments (helical) span residues 11 to 31 (ALIAALVLGYACGAIPFGLIL), 87 to 107 (PALAAGLGAFLGHLFPVWLGF), 116 to 136 (FIGVLLALSPLTLAAFAAIWL), and 158 to 178 (VILWALGHGGVAALFLVLAAL).

This sequence belongs to the PlsY family. Probably interacts with PlsX.

Its subcellular location is the cell inner membrane. It catalyses the reaction an acyl phosphate + sn-glycerol 3-phosphate = a 1-acyl-sn-glycero-3-phosphate + phosphate. Its pathway is lipid metabolism; phospholipid metabolism. Functionally, catalyzes the transfer of an acyl group from acyl-phosphate (acyl-PO(4)) to glycerol-3-phosphate (G3P) to form lysophosphatidic acid (LPA). This enzyme utilizes acyl-phosphate as fatty acyl donor, but not acyl-CoA or acyl-ACP. This chain is Glycerol-3-phosphate acyltransferase, found in Methylorubrum populi (strain ATCC BAA-705 / NCIMB 13946 / BJ001) (Methylobacterium populi).